Reading from the N-terminus, the 325-residue chain is Aldo-keto reductase family 1 member D1 (325 aa).

NADP(+)-binding positions include 22–26 (GLGTY) and aspartate 52. Tyrosine 26 is a binding site for substrate. Positions 57, 88, 119, and 131 each coordinate substrate. The Proton donor role is filled by tyrosine 57. NADP(+) is bound by residues 168–169 (SN), glutamine 192, and 218–223 (HSPLGT). At serine 228 the chain carries Phosphoserine. Substrate is bound at residue tryptophan 229. 272–282 (KSFTPERIKEN) serves as a coordination point for NADP(+).

Belongs to the aldo/keto reductase family.

The protein resides in the cytoplasm. It catalyses the reaction 5beta-cholestan-3-one + NADP(+) = cholest-4-en-3-one + NADPH + H(+). It carries out the reaction 4,5beta-dihydrocortisone + NADP(+) = cortisone + NADPH + H(+). The enzyme catalyses cortisol + NADPH + H(+) = 5beta-dihydrocortisol + NADP(+). The catalysed reaction is corticosterone + NADPH + H(+) = 5beta-dihydrocorticosterone + NADP(+). It catalyses the reaction 7alpha,12alpha-dihydroxycholest-4-en-3-one + NADPH + H(+) = 7alpha,12alpha-dihydroxy-5beta-cholestan-3-one + NADP(+). It carries out the reaction 7alpha-hydroxycholest-4-en-3-one + NADPH + H(+) = 7alpha-hydroxy-5beta-cholestan-3-one + NADP(+). The enzyme catalyses epitestosterone + NADPH + H(+) = 5beta-dihydroepitestosterone + NADP(+). The catalysed reaction is androst-4-ene-3,17-dione + NADPH + H(+) = 5beta-androstane-3,17-dione + NADP(+). It catalyses the reaction progesterone + NADPH + H(+) = 5beta-pregnan-3,20-dione + NADP(+). It carries out the reaction 21-hydroxyprogesterone + NADPH + H(+) = 5beta-dihydrodeoxycorticosterone + NADP(+). The enzyme catalyses aldosterone + NADPH + H(+) = 5beta-dihydroaldosterone + NADP(+). The catalysed reaction is 17beta-hydroxyandrosta-1,4-dien-3-one + NADPH + H(+) = 17beta-hydroxy-5beta-androst-1-en-3-one + NADP(+). It catalyses the reaction 17beta-hydroxyestr-4-en-3-one + NADPH + H(+) = 17beta-hydroxy-5beta-estran-3-one + NADP(+). It carries out the reaction 5beta-dihydrotestosterone + NADP(+) = testosterone + NADPH + H(+). The enzyme catalyses androst-4-ene-3,11,17-trione + NADPH + H(+) = 17beta-hydroxyandrost-4-ene-3,11-dione + NADP(+). With respect to regulation, subject to inhibition by high substrate concentrations. Inhibited by testosterone concentrations above 10 uM. Inhibited by the primary and secondary bile acids chenodeoxycholic acid and ursodeoxycholic acid. In terms of biological role, catalyzes the stereospecific NADPH-dependent reduction of the C4-C5 double bond of bile acid intermediates and steroid hormones carrying a delta(4)-3-one structure to yield an A/B cis-ring junction. This cis-configuration is crucial for bile acid biosynthesis and plays important roles in steroid metabolism. Capable of reducing a broad range of delta-(4)-3-ketosteroids from C18 (such as, 17beta-hydroxyestr-4-en-3-one) to C27 (such as, 7alpha-hydroxycholest-4-en-3-one). This Mus musculus (Mouse) protein is Aldo-keto reductase family 1 member D1 (Akr1d1).